The following is a 295-amino-acid chain: Nucleotide-binding protein RBAM_031990 (295 aa).

An ATP-binding site is contributed by 16-23 (GMSGAGKT). Position 67–70 (67–70 (DLRG)) interacts with GTP.

It belongs to the RapZ-like family.

Functionally, displays ATPase and GTPase activities. In Bacillus velezensis (strain DSM 23117 / BGSC 10A6 / LMG 26770 / FZB42) (Bacillus amyloliquefaciens subsp. plantarum), this protein is Nucleotide-binding protein RBAM_031990.